The primary structure comprises 155 residues: Fibroblast growth factor 2 (155 aa).

Positions 1-9 (MAAGSITTL) are excised as a propeptide. A disordered region spans residues 1 to 20 (MAAGSITTLPALPEDGGSSA). Asparagine 36 contributes to the heparin binding site. The Cell attachment site; atypical signature appears at 46–48 (DGR). Tyrosine 82 carries the post-translational modification Phosphotyrosine; by TEC. Positions 88–90 (DGR) match the Cell attachment site; atypical motif. A Glycyl lysine isopeptide (Lys-Gly) (interchain with G-Cter in SUMO1) cross-link involves residue lysine 95. The tract at residues 128-144 (KRTGQYKLGPKTGPGQK) is heparin-binding.

Belongs to the heparin-binding growth factors family. As to quaternary structure, monomer. Homodimer. Interacts with FGFR1, FGFR2, FGFR3 and FGFR4. Affinity between fibroblast growth factors (FGFs) and their receptors is increased by heparan sulfate glycosaminoglycans that function as coreceptors. Interacts with CSPG4, FGFBP1 and TEC. Found in a complex with FGFBP1, FGF1 and FGF2. Interacts with FGFBP3. Interacts with integrin ITGAV:ITGB3; the interaction is required for FGF2 signaling. Interacts with SNORC (via the extracellular domain). Interacts with glypican GPC3. Post-translationally, phosphorylation at Tyr-82 regulates FGF2 unconventional secretion.

It localises to the secreted. The protein localises to the nucleus. Functionally, acts as a ligand for FGFR1, FGFR2, FGFR3 and FGFR4. Also acts as an integrin ligand which is required for FGF2 signaling. Binds to integrin ITGAV:ITGB3. Plays an important role in the regulation of cell survival, cell division, cell differentiation and cell migration. Functions as a potent mitogen in vitro. Can induce angiogenesis. Mediates phosphorylation of ERK1/2 and thereby promotes retinal lens fiber differentiation. The sequence is that of Fibroblast growth factor 2 (FGF2) from Ovis aries (Sheep).